We begin with the raw amino-acid sequence, 312 residues long: tRNA-dihydrouridine(16) synthase (312 aa).

FMN is bound by residues 7–9 (PME) and Gln-68. Cys-98 (proton donor) is an active-site residue. Residues Lys-139, 200 to 202 (NGE), and 224 to 225 (GR) contribute to the FMN site.

Belongs to the Dus family. DusC subfamily. It depends on FMN as a cofactor.

It carries out the reaction 5,6-dihydrouridine(16) in tRNA + NADP(+) = uridine(16) in tRNA + NADPH + H(+). It catalyses the reaction 5,6-dihydrouridine(16) in tRNA + NAD(+) = uridine(16) in tRNA + NADH + H(+). Its function is as follows. Catalyzes the synthesis of 5,6-dihydrouridine (D), a modified base found in the D-loop of most tRNAs, via the reduction of the C5-C6 double bond in target uridines. Specifically modifies U16 in tRNAs. The polypeptide is tRNA-dihydrouridine(16) synthase (Yersinia pestis).